Consider the following 235-residue polypeptide: Triosephosphate isomerase (235 aa).

Position 7–9 (7–9 (NFK)) interacts with substrate. The Electrophile role is filled by His-92. Residue Glu-161 is the Proton acceptor of the active site. The substrate site is built by Gly-167 and Ser-197.

The protein belongs to the triosephosphate isomerase family. As to quaternary structure, homodimer.

Its subcellular location is the cytoplasm. The enzyme catalyses D-glyceraldehyde 3-phosphate = dihydroxyacetone phosphate. It participates in carbohydrate biosynthesis; gluconeogenesis. The protein operates within carbohydrate degradation; glycolysis; D-glyceraldehyde 3-phosphate from glycerone phosphate: step 1/1. Involved in the gluconeogenesis. Catalyzes stereospecifically the conversion of dihydroxyacetone phosphate (DHAP) to D-glyceraldehyde-3-phosphate (G3P). In Helicobacter hepaticus (strain ATCC 51449 / 3B1), this protein is Triosephosphate isomerase.